Consider the following 315-residue polypeptide: ATP synthase gamma chain (315 aa).

In terms of assembly, F-type ATPases have 2 components, CF(1) - the catalytic core - and CF(0) - the membrane proton channel. CF(1) has five subunits: alpha(3), beta(3), gamma(1), delta(1), epsilon(1). CF(0) has four main subunits: a(1), b(1), b'(1) and c(9-12).

The protein localises to the cellular thylakoid membrane. Its function is as follows. Produces ATP from ADP in the presence of a proton gradient across the membrane. The gamma chain is believed to be important in regulating ATPase activity and the flow of protons through the CF(0) complex. The complex from the organism is particularly stable to disruption and remains functional after 6 hrs at 55 degrees Celsius. The protein is ATP synthase gamma chain of Thermosynechococcus vestitus (strain NIES-2133 / IAM M-273 / BP-1).